Here is a 440-residue protein sequence, read N- to C-terminus: WAS/WASL-interacting protein family member 2 (440 aa).

Over residues 1–18 (MPIPPPPPPPPGPPPPPT) the composition is skewed to pro residues. The tract at residues 1–36 (MPIPPPPPPPPGPPPPPTFHQANTEQPKLSRDEQRG) is disordered. Residues 36–53 (GRGALLQDICKGTKLKKV) form the WH2 domain. Position 37 is an asymmetric dimethylarginine (Arg37). The segment at 49–52 (KLKK) is binds actin. Disordered stretches follow at residues 56-387 (INDR…DSIT) and 419-440 (RIYP…PILR). Over residues 116-133 (PSSRAAAPRPPVSAASGR) the composition is skewed to low complexity. The segment covering 161–172 (RPNTTSSTGMKH) has biased composition (polar residues). Pro residues-rich tracts occupy residues 176–193 (APPP…PTPL), 222–236 (EGPP…PPSP), 249–262 (APPP…PGVP), and 356–378 (RGKP…PPPL).

This sequence belongs to the verprolin family. In terms of assembly, interacts with WASL and WASP, and this interaction results in cytoplasmic relocation of these two proteins along actin filaments. Interacts with NCK2 resulting in the localization to sites of focal adhesions. No interaction was seen with WASF2 and WASF3. As to expression, expressed mainly in brain, colon, lung and stomach (at protein level). Ubiquitously expressed, with high expression in brain, kidney, lung, and placenta.

The protein localises to the cytoplasm. It is found in the cytoskeleton. In terms of biological role, plays an active role in the formation of cell surface protrusions downstream of activated PDGFB receptors. Plays an important role in actin-microspike formation through cooperation with WASL. May cooperate with WASP and WASL to induce mobilization and reorganization of the actin filament system. This chain is WAS/WASL-interacting protein family member 2 (WIPF2), found in Homo sapiens (Human).